Reading from the N-terminus, the 104-residue chain is Flagellar hook-basal body complex protein FliE (104 aa).

It belongs to the FliE family.

Its subcellular location is the bacterial flagellum basal body. The polypeptide is Flagellar hook-basal body complex protein FliE (Salmonella newport (strain SL254)).